A 297-amino-acid polypeptide reads, in one-letter code: Probable endonuclease 4 (297 aa).

The segment at 1-21 is disordered; sequence MPEIGAHVSAAGGPQRAPERG. Residues H67, H107, E145, D179, H182, H216, D229, H231, and E261 each coordinate Zn(2+).

This sequence belongs to the AP endonuclease 2 family. Zn(2+) is required as a cofactor.

It catalyses the reaction Endonucleolytic cleavage to 5'-phosphooligonucleotide end-products.. Functionally, endonuclease IV plays a role in DNA repair. It cleaves phosphodiester bonds at apurinic or apyrimidinic (AP) sites, generating a 3'-hydroxyl group and a 5'-terminal sugar phosphate. This chain is Probable endonuclease 4, found in Halorhodospira halophila (strain DSM 244 / SL1) (Ectothiorhodospira halophila (strain DSM 244 / SL1)).